Reading from the N-terminus, the 131-residue chain is Snaclec A8 (131 aa).

Cystine bridges form between Cys-2/Cys-13, Cys-30/Cys-129, and Cys-104/Cys-121. The C-type lectin domain maps to 9–130; sequence HEGHCYKVFN…CGQPYRFTCE (122 aa).

This sequence belongs to the snaclec family. In terms of assembly, heterodimer; disulfide-linked. Expressed by the venom gland.

It localises to the secreted. Its function is as follows. Interferes with one step of hemostasis (modulation of platelet aggregation, or coagulation cascade, for example). In Macrovipera lebetinus (Levantine viper), this protein is Snaclec A8.